Here is a 130-residue protein sequence, read N- to C-terminus: ATP synthase epsilon chain (130 aa).

It belongs to the ATPase epsilon chain family. F-type ATPases have 2 components, CF(1) - the catalytic core - and CF(0) - the membrane proton channel. CF(1) has five subunits: alpha(3), beta(3), gamma(1), delta(1), epsilon(1). CF(0) has three main subunits: a, b and c.

It localises to the cell inner membrane. Produces ATP from ADP in the presence of a proton gradient across the membrane. The chain is ATP synthase epsilon chain from Pelagibacter ubique (strain HTCC1062).